We begin with the raw amino-acid sequence, 351 residues long: Biotin synthase (351 aa).

Positions 48 to 265 constitute a Radical SAM core domain; that stretch reads NKVRIHILDN…LCMFRLINPD (218 aa). [4Fe-4S] cluster-binding residues include cysteine 63, cysteine 67, and cysteine 70. Cysteine 107, cysteine 139, cysteine 199, and arginine 269 together coordinate [2Fe-2S] cluster.

The protein belongs to the radical SAM superfamily. Biotin synthase family. Homodimer. It depends on [4Fe-4S] cluster as a cofactor. [2Fe-2S] cluster is required as a cofactor.

It carries out the reaction (4R,5S)-dethiobiotin + (sulfur carrier)-SH + 2 reduced [2Fe-2S]-[ferredoxin] + 2 S-adenosyl-L-methionine = (sulfur carrier)-H + biotin + 2 5'-deoxyadenosine + 2 L-methionine + 2 oxidized [2Fe-2S]-[ferredoxin]. It functions in the pathway cofactor biosynthesis; biotin biosynthesis; biotin from 7,8-diaminononanoate: step 2/2. Its function is as follows. Catalyzes the conversion of dethiobiotin (DTB) to biotin by the insertion of a sulfur atom into dethiobiotin via a radical-based mechanism. This is Biotin synthase from Leptospira interrogans serogroup Icterohaemorrhagiae serovar Lai (strain 56601).